A 267-amino-acid polypeptide reads, in one-letter code: NLP effector protein 6 (267 aa).

Residues 1 to 35 (MRTTSPYSHCSHVEMNAGAFVTMLLVALSVCVAAA) form the signal peptide. N-linked (GlcNAc...) asparagine glycosylation occurs at Asn114. A Conserved undecapeptide motif motif is present at residues 117-127 (AIMYAWYFPKR). Residues 134-140 (IQRHDWK) carry the Conserved heptapeptide motif motif. A glycan (N-linked (GlcNAc...) asparagine) is linked at Asn192.

The protein belongs to the Necrosis inducing protein (NPP1) family.

The protein resides in the secreted. Functionally, probable secreted effector that may act as a pathogen-associated molecular pattern (PAMP) recognized by the plant immune system. The polypeptide is NLP effector protein 6 (Plasmopara viticola (Downy mildew of grapevine)).